The primary structure comprises 430 residues: CinA-like protein (430 aa).

Belongs to the CinA family.

The polypeptide is CinA-like protein (Mycobacterium tuberculosis (strain ATCC 25177 / H37Ra)).